A 90-amino-acid polypeptide reads, in one-letter code: RING finger protein Z (90 aa).

G2 is lipidated: N-myristoyl glycine; by host. The RING-type; atypical zinc-finger motif lies at 32–68 (CKSCWQKFDSLVRCHDHYLCRHCLNLLLSVSDRCPLC). The PPXY motif signature appears at 85-88 (PPPY).

The protein belongs to the arenaviridae Z protein family. As to quaternary structure, interacts with protein NP; this interaction probably directs the encapsidated genome to budding sites. Interacts (via RING-type zinc finger) with polymerase L; this interaction inhibits viral transcription and replication, Z partially blocks the product exit tunnel for the releasing nascent RNA product. Interacts with the glycoprotein complex; this interaction plays a role in virion budding. Interacts (via RING-type zinc finger) with host EIF4E; this interaction results in conformational changes of both interacting proteins and reduces EIF4E affinity for its substrate, the 5'-m7 G cap structure. Interacts (via late-budding domain) with host TSG101; this interaction is essential for budding and release of viral particles. Interacts with host RPLP0; this interaction may serve to load ribosome-like particles inside the virion. Interacts with host PML; this interaction induces PML bodies redistribution in the cytoplasm upon viral infection. Myristoylation is required for the role of RING finger protein Z in assembly and budding.

The protein localises to the virion. Its subcellular location is the host cytoplasm. It is found in the host perinuclear region. It localises to the host cell membrane. Plays a crucial role in virion assembly and budding. Expressed late in the virus life cycle, it acts as an inhibitor of viral transcription and RNA synthesis by interacting with the viral polymerase L. Presumably recruits the NP encapsidated genome to cellular membranes at budding sites via direct interaction with NP. Plays critical roles in the final steps of viral release by interacting with host TSG101, a member of the vacuolar protein-sorting pathway and using other cellular host proteins involved in vesicle formation pathway. The budding of the virus progeny occurs after association of protein Z with the viral glycoprotein complex SSP-GP1-GP2 at the cell periphery, step that requires myristoylation of protein Z. Also selectively represses protein production by associating with host EIF4E. In cell-based minigenome assay, has an inhibitory effect on the ribonucleoprotein machinery (vRNP), which is responsible for the replication and transcription of the viral genome. The protein is RING finger protein Z of Homo sapiens (Human).